The chain runs to 130 residues: Single-stranded DNA-binding protein 1 (130 aa).

Positions 1-104 (MINNVVLIGR…VVAESFQILE (104 aa)) constitute an SSB domain. Positions 108 to 130 (NTANTSSLADSMPDYGPEPDLPF) are disordered.

In terms of assembly, homotetramer.

This Streptococcus pyogenes serotype M18 (strain MGAS8232) protein is Single-stranded DNA-binding protein 1 (ssb1).